A 331-amino-acid polypeptide reads, in one-letter code: Adenosine deaminase (331 aa).

Zn(2+) contacts are provided by His-12 and His-14. Substrate is bound by residues His-14, Asp-16, and Gly-170. His-197 provides a ligand contact to Zn(2+). Residue Glu-200 is the Proton donor of the active site. Asp-278 is a binding site for Zn(2+). Residue Asp-279 participates in substrate binding.

Belongs to the metallo-dependent hydrolases superfamily. Adenosine and AMP deaminases family. Adenosine deaminase subfamily. Requires Zn(2+) as cofactor.

It catalyses the reaction adenosine + H2O + H(+) = inosine + NH4(+). The catalysed reaction is 2'-deoxyadenosine + H2O + H(+) = 2'-deoxyinosine + NH4(+). Catalyzes the hydrolytic deamination of adenosine and 2-deoxyadenosine. The polypeptide is Adenosine deaminase (Shewanella oneidensis (strain ATCC 700550 / JCM 31522 / CIP 106686 / LMG 19005 / NCIMB 14063 / MR-1)).